The following is a 207-amino-acid chain: Small ribosomal subunit protein uS4 (207 aa).

The disordered stretch occupies residues 31-54; sequence KCKLDSKPGQHGRTSGARTSDYGN. The segment covering 42–53 has biased composition (polar residues); it reads GRTSGARTSDYG. The 64-residue stretch at 97 to 160 folds into the S4 RNA-binding domain; it reads SRLDNVVYRM…KKQVRIAEAL (64 aa).

This sequence belongs to the universal ribosomal protein uS4 family. Part of the 30S ribosomal subunit. Contacts protein S5. The interaction surface between S4 and S5 is involved in control of translational fidelity.

One of the primary rRNA binding proteins, it binds directly to 16S rRNA where it nucleates assembly of the body of the 30S subunit. In terms of biological role, with S5 and S12 plays an important role in translational accuracy. This is Small ribosomal subunit protein uS4 from Cupriavidus metallidurans (strain ATCC 43123 / DSM 2839 / NBRC 102507 / CH34) (Ralstonia metallidurans).